We begin with the raw amino-acid sequence, 118 residues long: Large ribosomal subunit protein uL18 (118 aa).

The interval 1 to 25 (MISKPDKNKLRQKRHRRVRGKLSGT) is disordered. Basic residues predominate over residues 10–20 (LRQKRHRRVRG).

It belongs to the universal ribosomal protein uL18 family. As to quaternary structure, part of the 50S ribosomal subunit; part of the 5S rRNA/L5/L18/L25 subcomplex. Contacts the 5S and 23S rRNAs.

Its function is as follows. This is one of the proteins that bind and probably mediate the attachment of the 5S RNA into the large ribosomal subunit, where it forms part of the central protuberance. The protein is Large ribosomal subunit protein uL18 of Streptococcus pneumoniae (strain Hungary19A-6).